We begin with the raw amino-acid sequence, 361 residues long: Phospho-N-acetylmuramoyl-pentapeptide-transferase (361 aa).

10 helical membrane-spanning segments follow: residues Gly-27–Leu-47, Thr-72–Ala-92, Val-99–Leu-119, Ala-139–Tyr-159, Ala-169–Gly-189, Gly-200–Val-220, Leu-240–Pro-260, Ile-264–Ala-284, Ile-289–Val-309, and Gln-338–Leu-358.

Belongs to the glycosyltransferase 4 family. MraY subfamily. Mg(2+) is required as a cofactor.

The protein resides in the cell inner membrane. The enzyme catalyses UDP-N-acetyl-alpha-D-muramoyl-L-alanyl-gamma-D-glutamyl-meso-2,6-diaminopimeloyl-D-alanyl-D-alanine + di-trans,octa-cis-undecaprenyl phosphate = di-trans,octa-cis-undecaprenyl diphospho-N-acetyl-alpha-D-muramoyl-L-alanyl-D-glutamyl-meso-2,6-diaminopimeloyl-D-alanyl-D-alanine + UMP. Its pathway is cell wall biogenesis; peptidoglycan biosynthesis. In terms of biological role, catalyzes the initial step of the lipid cycle reactions in the biosynthesis of the cell wall peptidoglycan: transfers peptidoglycan precursor phospho-MurNAc-pentapeptide from UDP-MurNAc-pentapeptide onto the lipid carrier undecaprenyl phosphate, yielding undecaprenyl-pyrophosphoryl-MurNAc-pentapeptide, known as lipid I. In Methylobacterium sp. (strain 4-46), this protein is Phospho-N-acetylmuramoyl-pentapeptide-transferase.